The chain runs to 426 residues: Protein FAM124B (426 aa).

Belongs to the FAM124 family.

It localises to the nucleus. In Xenopus tropicalis (Western clawed frog), this protein is Protein FAM124B (fam124b).